The primary structure comprises 723 residues: BBSome complex assembly protein BBS10 (723 aa).

Belongs to the TCP-1 chaperonin family. In terms of assembly, component of a complex composed at least of MKKS, BBS10, BBS12, TCP1, CCT2, CCT3, CCT4, CCT5 and CCT8.

The protein localises to the cell projection. The protein resides in the cilium. Its function is as follows. Probable molecular chaperone that assists the folding of proteins upon ATP hydrolysis. Plays a role in the assembly of BBSome, a complex involved in ciliogenesis regulating transports vesicles to the cilia. Involved in adipogenic differentiation. The polypeptide is BBSome complex assembly protein BBS10 (BBS10) (Pongo abelii (Sumatran orangutan)).